The sequence spans 357 residues: Glycerol-3-phosphate dehydrogenase [NAD(P)+] (357 aa).

NADPH contacts are provided by serine 30, phenylalanine 31, arginine 51, and lysine 124. 2 residues coordinate sn-glycerol 3-phosphate: lysine 124 and glycine 152. Alanine 156 contributes to the NADPH binding site. Sn-glycerol 3-phosphate-binding residues include lysine 207, aspartate 260, serine 270, arginine 271, and asparagine 272. Residue lysine 207 is the Proton acceptor of the active site. Arginine 271 provides a ligand contact to NADPH. Glutamate 297 is an NADPH binding site.

Belongs to the NAD-dependent glycerol-3-phosphate dehydrogenase family.

The protein localises to the cytoplasm. The enzyme catalyses sn-glycerol 3-phosphate + NAD(+) = dihydroxyacetone phosphate + NADH + H(+). It catalyses the reaction sn-glycerol 3-phosphate + NADP(+) = dihydroxyacetone phosphate + NADPH + H(+). It functions in the pathway membrane lipid metabolism; glycerophospholipid metabolism. Its function is as follows. Catalyzes the reduction of the glycolytic intermediate dihydroxyacetone phosphate (DHAP) to sn-glycerol 3-phosphate (G3P), the key precursor for phospholipid synthesis. The protein is Glycerol-3-phosphate dehydrogenase [NAD(P)+] of Acinetobacter baumannii (strain SDF).